An 851-amino-acid chain; its full sequence is DNA mismatch repair protein MutS (851 aa).

Residue 614–621 (GPNMGGKS) participates in ATP binding.

The protein belongs to the DNA mismatch repair MutS family.

Its function is as follows. This protein is involved in the repair of mismatches in DNA. It is possible that it carries out the mismatch recognition step. This protein has a weak ATPase activity. The polypeptide is DNA mismatch repair protein MutS (Yersinia pestis).